A 197-amino-acid polypeptide reads, in one-letter code: Recombination protein RecR (197 aa).

The C4-type zinc finger occupies 55–70 (CVQCRDFTESEVCAIC). A Toprim domain is found at 78 to 173 (QQLCVVESPA…RPSRLAQGMP (96 aa)).

It belongs to the RecR family.

Functionally, may play a role in DNA repair. It seems to be involved in an RecBC-independent recombinational process of DNA repair. It may act with RecF and RecO. In Xanthomonas campestris pv. campestris (strain 8004), this protein is Recombination protein RecR.